Here is a 281-residue protein sequence, read N- to C-terminus: MQLIDGKSLAHKVQENVAKEVEELKQVKNIVPGLAVLLIGDDPASHAYVNMKAKACERVGFYSITHNMPDTISQDEIIATIEMMNANPRIDGILVQLPLPKHIDTNKILEVIDPKKDVDGFHAYNVGRLVTGLDSFVACTPLGVMKMFEEYEIDLEGKDVCVVGASNIVGKPMASLLLNANATVTITHIFTKDLKAHTSQADIVVVGVGVPGLIKEDMVKEGAIVIDIGINRIEDGSLVGDVDFKNVAPKCSYITPVPGGVGPMTIAMLLSNTLKSAKQRA.

NADP(+) contacts are provided by residues 164 to 166 (GAS), Ile189, and Ile230.

It belongs to the tetrahydrofolate dehydrogenase/cyclohydrolase family. Homodimer.

It carries out the reaction (6R)-5,10-methylene-5,6,7,8-tetrahydrofolate + NADP(+) = (6R)-5,10-methenyltetrahydrofolate + NADPH. It catalyses the reaction (6R)-5,10-methenyltetrahydrofolate + H2O = (6R)-10-formyltetrahydrofolate + H(+). Its pathway is one-carbon metabolism; tetrahydrofolate interconversion. Its function is as follows. Catalyzes the oxidation of 5,10-methylenetetrahydrofolate to 5,10-methenyltetrahydrofolate and then the hydrolysis of 5,10-methenyltetrahydrofolate to 10-formyltetrahydrofolate. The sequence is that of Bifunctional protein FolD from Sulfurovum sp. (strain NBC37-1).